Here is a 413-residue protein sequence, read N- to C-terminus: Serine hydroxymethyltransferase (413 aa).

(6S)-5,6,7,8-tetrahydrofolate contacts are provided by residues Leu-117 and 121-123 (GHL). Residue Lys-226 is modified to N6-(pyridoxal phosphate)lysine. Residues Glu-239 and 349 to 351 (SPF) each bind (6S)-5,6,7,8-tetrahydrofolate.

Belongs to the SHMT family. Homodimer. Pyridoxal 5'-phosphate serves as cofactor.

It is found in the cytoplasm. It carries out the reaction (6R)-5,10-methylene-5,6,7,8-tetrahydrofolate + glycine + H2O = (6S)-5,6,7,8-tetrahydrofolate + L-serine. The protein operates within one-carbon metabolism; tetrahydrofolate interconversion. It participates in amino-acid biosynthesis; glycine biosynthesis; glycine from L-serine: step 1/1. Catalyzes the reversible interconversion of serine and glycine with tetrahydrofolate (THF) serving as the one-carbon carrier. This reaction serves as the major source of one-carbon groups required for the biosynthesis of purines, thymidylate, methionine, and other important biomolecules. Also exhibits THF-independent aldolase activity toward beta-hydroxyamino acids, producing glycine and aldehydes, via a retro-aldol mechanism. This chain is Serine hydroxymethyltransferase, found in Bacillus anthracis (strain A0248).